The primary structure comprises 1616 residues: Myosin-IIIa (1616 aa).

Positions 21–287 (WEITETIGKG…VSELLQHKFI (267 aa)) constitute a Protein kinase domain. ATP contacts are provided by residues 27–35 (IGKGTYGKV) and K50. Catalysis depends on D150, which acts as the Proton acceptor. One can recognise a Myosin motor domain in the interval 338 to 1053 (KDVDDLATLE…HVEQLNLMRK (716 aa)). Positions 934–956 (LMDLLSKMVVGQPHFVRCIKPNS) are actin-binding. IQ domains lie at 1055–1084 (AIDK…KRKE), 1082–1111 (RKES…MKNT), and 1346–1375 (EDKA…SSFK). The segment at 1401-1479 (EEINNIKKKD…RRVSSQQCLS (79 aa)) is interaction with MORN4. Disordered stretches follow at residues 1545 to 1567 (LPSR…QQEL) and 1581 to 1616 (AESP…VQQS). Composition is skewed to basic and acidic residues over residues 1550–1564 (GPKE…RRPQ) and 1583–1592 (SPEKEEEREP). Basic residues predominate over residues 1602-1616 (LLRKTSQRRRLVQQS).

In the C-terminal section; belongs to the TRAFAC class myosin-kinesin ATPase superfamily. Myosin family. The protein in the N-terminal section; belongs to the protein kinase superfamily. STE Ser/Thr protein kinase family. As to quaternary structure, interacts with MORN4. Interacts (via C-terminus) with ESPN and ESPNL. In terms of tissue distribution, strongest expression in retina, retinal pigment epithelial cells, cochlea and pancreas.

It is found in the cytoplasm. Its subcellular location is the cytoskeleton. It localises to the cell projection. The protein resides in the filopodium tip. The protein localises to the stereocilium. The catalysed reaction is L-seryl-[protein] + ATP = O-phospho-L-seryl-[protein] + ADP + H(+). It catalyses the reaction L-threonyl-[protein] + ATP = O-phospho-L-threonyl-[protein] + ADP + H(+). It carries out the reaction ATP + H2O = ADP + phosphate + H(+). Functionally, actin-dependent motor protein with a protein kinase activity, playing an essential role in hearing. Probably also plays a role in vision. Required for normal cochlear hair bundle development and hearing. Plays an important role in the early steps of cochlear hair bundle morphogenesis. Influences the number and lengths of stereocilia to be produced and limits the growth of microvilli within the forming auditory hair bundles thereby contributing to the architecture of the hair bundle, including its staircase pattern. Involved in the elongation of actin in stereocilia tips by transporting the actin regulatory factor ESPN to the plus ends of actin filaments. The protein is Myosin-IIIa (MYO3A) of Homo sapiens (Human).